The sequence spans 285 residues: MIYPDETMLYAPVEWHDCSEGYTDIRYEKSTDGIAKITINRPQVRNAFRPLTVKEMIQALADARYDDNVGVIILTGEGDKAFCAGGDQKVRGDYGGYQDDSGVHHLNVLDFQRQIRTCPKPVVAMVAGYSIGGGHVLHMMCDLTIAAENAIFGQTGPKVGSFDGGWGASYMARIVGQKKAREIWFLCRQYDAQQALDMGLVNTVVPLADLEKETVRWCREMLQNSPMALRCLKAALNADCDGQAGLQELAGNATMLFYMTEEGQEGRNAFNQKRQPDFSKFKRNP.

Substrate-binding positions include arginine 45, alanine 84–glutamine 88, tyrosine 97, tyrosine 129–glycine 133, threonine 155, serine 161, tyrosine 258, and lysine 273. Hydrogencarbonate is bound at residue glutamine 154–glycine 156.

The protein belongs to the enoyl-CoA hydratase/isomerase family. MenB subfamily. In terms of assembly, homohexamer. Requires hydrogencarbonate as cofactor.

The catalysed reaction is 2-succinylbenzoyl-CoA + H(+) = 1,4-dihydroxy-2-naphthoyl-CoA + H2O. The protein operates within quinol/quinone metabolism; 1,4-dihydroxy-2-naphthoate biosynthesis; 1,4-dihydroxy-2-naphthoate from chorismate: step 6/7. It participates in quinol/quinone metabolism; menaquinone biosynthesis. Functionally, converts o-succinylbenzoyl-CoA (OSB-CoA) to 1,4-dihydroxy-2-naphthoyl-CoA (DHNA-CoA). The sequence is that of 1,4-dihydroxy-2-naphthoyl-CoA synthase from Salmonella typhimurium (strain LT2 / SGSC1412 / ATCC 700720).